The chain runs to 192 residues: Molybdenum cofactor guanylyltransferase (192 aa).

GTP is bound by residues 10 to 12 (LAG), Lys23, Asn51, Asp69, and Asp99. Residue Asp99 participates in Mg(2+) binding.

It belongs to the MobA family. Monomer. It depends on Mg(2+) as a cofactor.

It is found in the cytoplasm. The enzyme catalyses Mo-molybdopterin + GTP + H(+) = Mo-molybdopterin guanine dinucleotide + diphosphate. Its function is as follows. Transfers a GMP moiety from GTP to Mo-molybdopterin (Mo-MPT) cofactor (Moco or molybdenum cofactor) to form Mo-molybdopterin guanine dinucleotide (Mo-MGD) cofactor. This Haemophilus influenzae (strain 86-028NP) protein is Molybdenum cofactor guanylyltransferase.